The chain runs to 195 residues: MYLINQNGWIEVICGSMFSGKSEELIRRVRRTQFAKQHAIVFKPCIDNRYSEEDVVSHNGLKVKAVPVSASKDIFEHITEEMDVIAIDEVQFFDGDIVEVVQVLANRGYRVIVAGLDQDFRGLPFGQVPQLMAIAEHVTKLQAVCSACGSPASRTQRLIDGEPAAFDDPIILVGASESYEPRCRHXHAVPTNKDK.

ATP is bound by residues 15–22 (GSMFSGKS) and 88–91 (DEVQ). The active-site Proton acceptor is the Glu89. Zn(2+)-binding residues include Cys145, Cys148, Cys183, and Xaa186.

Belongs to the thymidine kinase family. Homotetramer.

It is found in the cytoplasm. The enzyme catalyses thymidine + ATP = dTMP + ADP + H(+). This Bacillus cereus (strain ATCC 10987 / NRS 248) protein is Thymidine kinase.